The sequence spans 254 residues: Imidazole glycerol phosphate synthase subunit HisF (254 aa).

Catalysis depends on residues Asp11 and Asp130.

This sequence belongs to the HisA/HisF family. As to quaternary structure, heterodimer of HisH and HisF.

It localises to the cytoplasm. The enzyme catalyses 5-[(5-phospho-1-deoxy-D-ribulos-1-ylimino)methylamino]-1-(5-phospho-beta-D-ribosyl)imidazole-4-carboxamide + L-glutamine = D-erythro-1-(imidazol-4-yl)glycerol 3-phosphate + 5-amino-1-(5-phospho-beta-D-ribosyl)imidazole-4-carboxamide + L-glutamate + H(+). It functions in the pathway amino-acid biosynthesis; L-histidine biosynthesis; L-histidine from 5-phospho-alpha-D-ribose 1-diphosphate: step 5/9. Its function is as follows. IGPS catalyzes the conversion of PRFAR and glutamine to IGP, AICAR and glutamate. The HisF subunit catalyzes the cyclization activity that produces IGP and AICAR from PRFAR using the ammonia provided by the HisH subunit. The chain is Imidazole glycerol phosphate synthase subunit HisF from Oceanobacillus iheyensis (strain DSM 14371 / CIP 107618 / JCM 11309 / KCTC 3954 / HTE831).